The following is a 572-amino-acid chain: Triacylglycerol lipase OBL1 (572 aa).

Residues 110–130 (GYLVEFFLNLFSLNGNFLGLL) traverse the membrane as a helical segment. Residues 320-356 (IPPSESSKSSTSFSDSDAHTGSDLSSDSERPTDTRKK) form a disordered region. A compositionally biased stretch (low complexity) spans 323-334 (SESSKSSTSFSD). Residues 346 to 356 (DSERPTDTRKK) show a composition bias toward basic and acidic residues. The short motif at 391 to 395 (GHSLG) is the GXSXG element. S393 acts as the Nucleophile in catalysis. Residues D457 and H550 each act as charge relay system in the active site.

Belongs to the AB hydrolase superfamily. Lipase family. As to expression, expressed in pollen grains and pollen tubes.

Its subcellular location is the lipid droplet. It is found in the membrane. It carries out the reaction 1,2-di-(9Z-octadecenoyl)-glycerol + (9Z)-octadecenoate + H(+) = 1,2,3-tri-(9Z-octadecenoyl)-glycerol + H2O. The enzyme catalyses 1-(9Z-octadecenoyl)-glycerol + H2O = glycerol + (9Z)-octadecenoate + H(+). Acid lipase that can hydrolyze a range of triacylglycerols without a clear preference for acyl-chains. Can also cleave 1,2-diacylglycerol, 1,3-diacylglycerol and 1-monoacylglycerol, but not phosphatidylcholine, phosphatidylethanolamine, or sterol esters. Required for pollen tube growth. Triacylglycerol hydrolysis by OBL1 may provide acyl groups for the synthesis of membrane lipids in growing pollen tubes. The chain is Triacylglycerol lipase OBL1 from Nicotiana tabacum (Common tobacco).